We begin with the raw amino-acid sequence, 254 residues long: Ribonuclease HII (254 aa).

Residues T70–S254 form the RNase H type-2 domain. A divalent metal cation contacts are provided by D76, E77, and D168.

This sequence belongs to the RNase HII family. Mn(2+) is required as a cofactor. It depends on Mg(2+) as a cofactor.

The protein resides in the cytoplasm. The enzyme catalyses Endonucleolytic cleavage to 5'-phosphomonoester.. Functionally, endonuclease that specifically degrades the RNA of RNA-DNA hybrids. The sequence is that of Ribonuclease HII from Bacillus pumilus (strain SAFR-032).